The following is a 78-amino-acid chain: Acyl carrier protein (78 aa).

Positions 2 to 77 constitute a Carrier domain; that stretch reads STIEERVKKI…AAIDYVTSHQ (76 aa). Ser37 is modified (O-(pantetheine 4'-phosphoryl)serine).

The protein belongs to the acyl carrier protein (ACP) family. 4'-phosphopantetheine is transferred from CoA to a specific serine of apo-ACP by AcpS. This modification is essential for activity because fatty acids are bound in thioester linkage to the sulfhydryl of the prosthetic group.

It localises to the cytoplasm. It participates in lipid metabolism; fatty acid biosynthesis. Its function is as follows. Carrier of the growing fatty acid chain in fatty acid biosynthesis. This chain is Acyl carrier protein, found in Pseudomonas fluorescens (strain SBW25).